The following is a 392-amino-acid chain: Gastricsin (392 aa).

The first 16 residues, Met1–Ala16, serve as a signal peptide directing secretion. A propeptide spans Ala17–Tyr62 (activation peptide). One can recognise a Peptidase A1 domain in the interval Tyr76–Ala389. Residue Asp94 is part of the active site. Intrachain disulfides connect Cys107–Cys112 and Cys270–Cys275. Asp280 is an active-site residue. Cys314 and Cys347 are joined by a disulfide.

This sequence belongs to the peptidase A1 family.

The protein resides in the secreted. The enzyme catalyses More restricted specificity than pepsin A, but shows preferential cleavage at Tyr-|-Xaa bonds. High activity on hemoglobin.. In terms of biological role, hydrolyzes a variety of proteins. The sequence is that of Gastricsin (Pgc) from Mus musculus (Mouse).